A 297-amino-acid polypeptide reads, in one-letter code: Mycothiol acetyltransferase (297 aa).

Glutamate 35 contributes to the 1D-myo-inositol 2-(L-cysteinylamino)-2-deoxy-alpha-D-glucopyranoside binding site. 73–75 (MLV) provides a ligand contact to acetyl-CoA. Residues 155 to 297 (LRTFGGTEAE…VAVHAQYGIP (143 aa)) enclose the N-acetyltransferase domain. The 1D-myo-inositol 2-(L-cysteinylamino)-2-deoxy-alpha-D-glucopyranoside site is built by glutamate 181, lysine 222, and glutamate 230. Residues 234-236 (LGV) and 241-247 (QGRGLGR) contribute to the acetyl-CoA site. Tyrosine 268 contacts 1D-myo-inositol 2-(L-cysteinylamino)-2-deoxy-alpha-D-glucopyranoside.

It belongs to the acetyltransferase family. MshD subfamily. Monomer.

It catalyses the reaction 1D-myo-inositol 2-(L-cysteinylamino)-2-deoxy-alpha-D-glucopyranoside + acetyl-CoA = mycothiol + CoA + H(+). Catalyzes the transfer of acetyl from acetyl-CoA to desacetylmycothiol (Cys-GlcN-Ins) to form mycothiol. This is Mycothiol acetyltransferase from Beutenbergia cavernae (strain ATCC BAA-8 / DSM 12333 / CCUG 43141 / JCM 11478 / NBRC 16432 / NCIMB 13614 / HKI 0122).